The following is a 417-amino-acid chain: uncharacterized protein (417 aa).

The protein belongs to the MG032/MG096/MG288 family.

This is an uncharacterized protein from Mycoplasma pneumoniae (strain ATCC 29342 / M129 / Subtype 1) (Mycoplasmoides pneumoniae).